A 239-amino-acid chain; its full sequence is Small ribosomal subunit protein uS2 (239 aa).

The protein belongs to the universal ribosomal protein uS2 family.

The polypeptide is Small ribosomal subunit protein uS2 (Francisella tularensis subsp. tularensis (strain WY96-3418)).